A 305-amino-acid chain; its full sequence is GTPase Era (305 aa).

The region spanning 13-181 (RCGFVAIVGR…ESAVGRFLPE (169 aa)) is the Era-type G domain. Residues 21 to 28 (GRPNVGKS) form a G1 region. Position 21–28 (21–28 (GRPNVGKS)) interacts with GTP. Residues 47–51 (QTTRH) form a G2 region. Residues 68–71 (DTPG) are G3. GTP contacts are provided by residues 68 to 72 (DTPGM) and 130 to 133 (NKVD). A G4 region spans residues 130-133 (NKVD). A G5 region spans residues 160–162 (LSA). The KH type-2 domain occupies 204–288 (VREKITRQLG…MLRLWVKVKR (85 aa)).

It belongs to the TRAFAC class TrmE-Era-EngA-EngB-Septin-like GTPase superfamily. Era GTPase family. In terms of assembly, monomer.

Its subcellular location is the cytoplasm. The protein resides in the cell inner membrane. An essential GTPase that binds both GDP and GTP, with rapid nucleotide exchange. Plays a role in 16S rRNA processing and 30S ribosomal subunit biogenesis and possibly also in cell cycle regulation and energy metabolism. This chain is GTPase Era, found in Marinobacter nauticus (strain ATCC 700491 / DSM 11845 / VT8) (Marinobacter aquaeolei).